The chain runs to 1002 residues: E3 ubiquitin-protein ligase BRE1B (1002 aa).

Residues 1 to 32 (MSGLSNKRAAGDGGSGPPEKKLNREEKTTTTL) form a disordered region. Basic and acidic residues predominate over residues 18 to 28 (PEKKLNREEKT). Lysine 20 is subject to N6-acetyllysine. A Phosphoserine modification is found at serine 42. The stretch at 55-91 (KNKKLAERLEQRQACEDELRERIEKLEKRQATDDATL) forms a coiled coil. The interval 120–148 (SSGTEVPGCQEGLTRDVIPRTDPGTSDLR) is disordered. Coiled coils occupy residues 190-378 (KAAV…LRSL) and 438-526 (LQKK…ASGS). Lysine 356 and lysine 518 each carry N6-acetyllysine. Disordered stretches follow at residues 520 to 562 (RAQA…PDSK) and 579 to 652 (KKEE…ESEL). Glycyl lysine isopeptide (Lys-Gly) (interchain with G-Cter in SUMO2) cross-links involve residues lysine 579 and lysine 580. 2 positions are modified to phosphoserine: serine 585 and serine 586. 2 stretches are compositionally biased toward basic and acidic residues: residues 603-620 (RGREPEARPKRELREREG) and 634-652 (RADREKAKAEEARRKESEL). Residues 628–947 (AASTLSRADR…EEIKEYKARL (320 aa)) adopt a coiled-coil conformation. Residues 949-988 (CPCCNTRKKDAVLTKCFHVFCFECVRGRYEARQRKCPKCN) form an RING-type zinc finger.

The protein belongs to the BRE1 family. As to quaternary structure, component of the RNF20/40 complex (also known as BRE1 complex) probably composed of 2 copies of RNF20/BRE1A and 2 copies of RNF40/BRE1B. Interacts with UBE2E1/UBCH6. Interacts with RB1 and WAC. May interact with STX1A. As to expression, ubiquitously expressed. Expressed in brain, testis, heart, liver and kidney. Weakly expressed in lung, spleen and skeletal muscle (at protein level).

It localises to the nucleus. It carries out the reaction S-ubiquitinyl-[E2 ubiquitin-conjugating enzyme]-L-cysteine + [acceptor protein]-L-lysine = [E2 ubiquitin-conjugating enzyme]-L-cysteine + N(6)-ubiquitinyl-[acceptor protein]-L-lysine.. It functions in the pathway protein modification; protein ubiquitination. Its function is as follows. Component of the RNF20/40 E3 ubiquitin-protein ligase complex that mediates monoubiquitination of 'Lys-120' of histone H2B (H2BK120ub1). H2BK120ub1 gives a specific tag for epigenetic transcriptional activation and is also prerequisite for histone H3 'Lys-4' and 'Lys-79' methylation (H3K4me and H3K79me, respectively). It thereby plays a central role in histone code and gene regulation. The RNF20/40 complex forms a H2B ubiquitin ligase complex in cooperation with the E2 enzyme UBE2A or UBE2B; reports about the cooperation with UBE2E1/UBCH are contradictory. Required for transcriptional activation of Hox genes. The chain is E3 ubiquitin-protein ligase BRE1B (Rnf40) from Rattus norvegicus (Rat).